The sequence spans 280 residues: Putative pyruvate, phosphate dikinase regulatory protein (280 aa).

153 to 160 (GISRTSKT) lines the ADP pocket.

This sequence belongs to the pyruvate, phosphate/water dikinase regulatory protein family. PDRP subfamily.

The catalysed reaction is N(tele)-phospho-L-histidyl/L-threonyl-[pyruvate, phosphate dikinase] + ADP = N(tele)-phospho-L-histidyl/O-phospho-L-threonyl-[pyruvate, phosphate dikinase] + AMP + H(+). The enzyme catalyses N(tele)-phospho-L-histidyl/O-phospho-L-threonyl-[pyruvate, phosphate dikinase] + phosphate + H(+) = N(tele)-phospho-L-histidyl/L-threonyl-[pyruvate, phosphate dikinase] + diphosphate. In terms of biological role, bifunctional serine/threonine kinase and phosphorylase involved in the regulation of the pyruvate, phosphate dikinase (PPDK) by catalyzing its phosphorylation/dephosphorylation. The polypeptide is Putative pyruvate, phosphate dikinase regulatory protein (Bartonella quintana (strain Toulouse) (Rochalimaea quintana)).